The following is a 169-amino-acid chain: Calfumirin-1 (169 aa).

4 EF-hand domains span residues 6-41, 42-77, 93-128, and 129-164; these read NIVE…KKAF, NPER…DKAL, EVEE…TGAK, and DPEK…VQKL. Residues Asp-19, Asn-21, Asp-23, Glu-25, Glu-30, Asp-55, Asp-57, Asp-59, Lys-61, Glu-66, Asp-108, Asn-110, Asp-112, Glu-117, Asp-142, Asn-144, Asp-146, Thr-148, and Glu-153 each coordinate Ca(2+).

May be involved in the phase-shift of cells from growth to differentiation. The chain is Calfumirin-1 (cafA) from Dictyostelium discoideum (Social amoeba).